Consider the following 63-residue polypeptide: Small ribosomal subunit protein eS17 (63 aa).

The protein belongs to the eukaryotic ribosomal protein eS17 family.

This chain is Small ribosomal subunit protein eS17 (rps17e), found in Haloarcula marismortui (strain ATCC 43049 / DSM 3752 / JCM 8966 / VKM B-1809) (Halobacterium marismortui).